The primary structure comprises 413 residues: Clamp protein VP6 (413 aa).

The protein belongs to the reoviridae clamp protein family. In terms of assembly, interacts with capsid proteins VP3, VP4 and VP7.

The protein localises to the virion. Its function is as follows. Located at the interface of the incomplete T=13 outer capsid and the pseudo T=2 inner capsid, 120 VP6 subunits clamp and stabilize the inner capsid shell. This Ctenopharyngodon idella (Grass carp) protein is Clamp protein VP6 (S8).